The chain runs to 125 residues: Small ribosomal subunit protein uS13 (125 aa).

The disordered stretch occupies residues 93-125; the sequence is RSLPVRGQRTRTNARTRKGKRKTVAGKKKAGKK.

Belongs to the universal ribosomal protein uS13 family. As to quaternary structure, part of the 30S ribosomal subunit. Forms a loose heterodimer with protein S19. Forms two bridges to the 50S subunit in the 70S ribosome.

Located at the top of the head of the 30S subunit, it contacts several helices of the 16S rRNA. In the 70S ribosome it contacts the 23S rRNA (bridge B1a) and protein L5 of the 50S subunit (bridge B1b), connecting the 2 subunits; these bridges are implicated in subunit movement. Contacts the tRNAs in the A and P-sites. This Chlorobaculum tepidum (strain ATCC 49652 / DSM 12025 / NBRC 103806 / TLS) (Chlorobium tepidum) protein is Small ribosomal subunit protein uS13.